The following is a 410-amino-acid chain: Exodeoxyribonuclease 7 large subunit (410 aa).

Belongs to the XseA family. In terms of assembly, heterooligomer composed of large and small subunits.

Its subcellular location is the cytoplasm. The enzyme catalyses Exonucleolytic cleavage in either 5'- to 3'- or 3'- to 5'-direction to yield nucleoside 5'-phosphates.. Functionally, bidirectionally degrades single-stranded DNA into large acid-insoluble oligonucleotides, which are then degraded further into small acid-soluble oligonucleotides. This is Exodeoxyribonuclease 7 large subunit from Alkaliphilus metalliredigens (strain QYMF).